The chain runs to 240 residues: 4-hydroxy-tetrahydrodipicolinate reductase (240 aa).

Residues 79-81 (ATT) and 103-106 (SANM) each bind NAD(+). Catalysis depends on His135, which acts as the Proton donor/acceptor. His136 is a binding site for (S)-2,3,4,5-tetrahydrodipicolinate. Lys139 functions as the Proton donor in the catalytic mechanism. Residue 145-146 (GT) participates in (S)-2,3,4,5-tetrahydrodipicolinate binding.

This sequence belongs to the DapB family.

Its subcellular location is the cytoplasm. It catalyses the reaction (S)-2,3,4,5-tetrahydrodipicolinate + NAD(+) + H2O = (2S,4S)-4-hydroxy-2,3,4,5-tetrahydrodipicolinate + NADH + H(+). The catalysed reaction is (S)-2,3,4,5-tetrahydrodipicolinate + NADP(+) + H2O = (2S,4S)-4-hydroxy-2,3,4,5-tetrahydrodipicolinate + NADPH + H(+). It functions in the pathway amino-acid biosynthesis; L-lysine biosynthesis via DAP pathway; (S)-tetrahydrodipicolinate from L-aspartate: step 4/4. Its function is as follows. Catalyzes the conversion of 4-hydroxy-tetrahydrodipicolinate (HTPA) to tetrahydrodipicolinate. This Staphylococcus aureus (strain MRSA252) protein is 4-hydroxy-tetrahydrodipicolinate reductase.